Consider the following 178-residue polypeptide: Fatty-acid and retinol-binding protein 1 (178 aa).

The signal sequence occupies residues 1 to 16 (MYHQLILMALIGVIMA). N-linked (GlcNAc...) asparagine glycosylation is found at Asn44 and Asn75. Coiled-coil stretches lie at residues 67–89 (DAAL…ELRN) and 123–153 (KLDV…ELKA). Asn157 carries an N-linked (GlcNAc...) asparagine glycan.

The protein belongs to the fatty-acid and retinol-binding protein (FARBP) family. Post-translationally, N-glycosylated.

It is found in the secreted. Binds retinol and different fatty acids. The sequence is that of Fatty-acid and retinol-binding protein 1 from Acanthocheilonema viteae (Filarial nematode worm).